The chain runs to 563 residues: DNA mismatch repair protein MutL (563 aa).

Belongs to the DNA mismatch repair MutL/HexB family.

Its function is as follows. This protein is involved in the repair of mismatches in DNA. It is required for dam-dependent methyl-directed DNA mismatch repair. May act as a 'molecular matchmaker', a protein that promotes the formation of a stable complex between two or more DNA-binding proteins in an ATP-dependent manner without itself being part of a final effector complex. In Trichormus variabilis (strain ATCC 29413 / PCC 7937) (Anabaena variabilis), this protein is DNA mismatch repair protein MutL.